Reading from the N-terminus, the 466-residue chain is MSVVPVADVLQGRVAVDSEVTVRGWVRTRRDSKAGFSFLAVYDGSCFDPVQAVINNSLPNYNQEVLRLTTGCSVIVTGKVVASQGQGQSFEIQATSVEVTGWVEDPDTYPMAAKRHSIEYLREVAHLRPRTNLIGAVARVRHTLAQALHRFFNEQGFFWVSTPLITASDTEGAGEMFRVSTLDLENLPRNDQGKVDFDKDFFGKESFLTVSGQLNGETYACALSKIYTFGPTFRAENSNTSRHLAEFWMLEPEVAFANLNDVAGLAEAMLKYVFKAVLEERADDMQFFAERVDKDAIDRLQRFITADFAQVDYTDAVTILENCGKQFENPVYWGVDLSSEHERYLAEEHFKAPVVVKNYPKDIKAFYMRLNEDGKTVAAMDVLAPGIGEIIGGSQREERLDVLDARMAEMGLNKEDYWWYRDLRRYGTVPHSGFGLGFERLIAYVTGVQNVRDVIPFPRTPRNATF.

It belongs to the class-II aminoacyl-tRNA synthetase family. Homodimer.

It localises to the cytoplasm. It catalyses the reaction tRNA(Asn) + L-asparagine + ATP = L-asparaginyl-tRNA(Asn) + AMP + diphosphate + H(+). The chain is Asparagine--tRNA ligase from Klebsiella pneumoniae subsp. pneumoniae (strain ATCC 700721 / MGH 78578).